Consider the following 288-residue polypeptide: tRNA pseudouridine synthase A (288 aa).

Asp58 functions as the Nucleophile in the catalytic mechanism. Substrate is bound at residue Tyr124.

The protein belongs to the tRNA pseudouridine synthase TruA family. As to quaternary structure, homodimer.

The catalysed reaction is uridine(38/39/40) in tRNA = pseudouridine(38/39/40) in tRNA. Formation of pseudouridine at positions 38, 39 and 40 in the anticodon stem and loop of transfer RNAs. The chain is tRNA pseudouridine synthase A from Corynebacterium diphtheriae (strain ATCC 700971 / NCTC 13129 / Biotype gravis).